The sequence spans 540 residues: MADISTTQVWQDLTDHYSNFQATTLRELFKEENRAEKYTFSAAGLHVDLSKNLLDDATLTKLLALTEESGLRERIDAMFAGEHLNNTEDRAVLHTALRLPAEADLSVDGQDVAADVHEVLGRMRDFATALRSGNWLGHTGHTIKKIVNIGIGGSDLGPAMATKALRAYATAGISAEFVSNVDPADLVSVLEDLDAESTLFVIASKTFTTQETLSNARAARAWLVEKLGEEAVAKHFVAVSTNAEKVAEFGIDTDNMFGFWDWVGGRYSVDSAVGLSLMAVIGPRDFMRFLGGFHAMDEHFRTTKFEENVPILMALLGVWYSDFYGAETHAVLPYSEDLSRFAAYLQQLTMESNGKSVHRDGSPVSTGTGEIYWGEPGTNGQHAFFQLIHQGTRLVPADFIGFARPKQDLPAGERTMHDLLMSNFFAQTKVLAFGKNAEEIAAEGVAPELVNHKVMPGNRPTTTILAEELTPSILGALIALYEHIVMVQGVIWDINSFDQWGVELGKQQANDLAPAVSGEEDVDSGDSSTDSLIKWYRANR.

E351 serves as the catalytic Proton donor. Active-site residues include H382 and K506.

This sequence belongs to the GPI family.

The protein localises to the cytoplasm. It carries out the reaction alpha-D-glucose 6-phosphate = beta-D-fructose 6-phosphate. It functions in the pathway carbohydrate biosynthesis; gluconeogenesis. The protein operates within carbohydrate degradation; glycolysis; D-glyceraldehyde 3-phosphate and glycerone phosphate from D-glucose: step 2/4. In terms of biological role, catalyzes the reversible isomerization of glucose-6-phosphate to fructose-6-phosphate. The protein is Glucose-6-phosphate isomerase of Corynebacterium glutamicum (strain ATCC 13032 / DSM 20300 / JCM 1318 / BCRC 11384 / CCUG 27702 / LMG 3730 / NBRC 12168 / NCIMB 10025 / NRRL B-2784 / 534).